We begin with the raw amino-acid sequence, 445 residues long: Putative U-box domain-containing protein 47 (445 aa).

Positions glutamate 64 to aspartate 137 constitute a U-box domain.

It carries out the reaction S-ubiquitinyl-[E2 ubiquitin-conjugating enzyme]-L-cysteine + [acceptor protein]-L-lysine = [E2 ubiquitin-conjugating enzyme]-L-cysteine + N(6)-ubiquitinyl-[acceptor protein]-L-lysine.. Its pathway is protein modification; protein ubiquitination. In terms of biological role, functions as an E3 ubiquitin ligase. The sequence is that of Putative U-box domain-containing protein 47 (PUB47) from Arabidopsis thaliana (Mouse-ear cress).